Consider the following 1195-residue polypeptide: Protein PIP82 (1195 aa).

The segment covering 1 to 10 (MSHQEQQFQH) has biased composition (low complexity). 9 disordered regions span residues 1 to 55 (MSHQ…IGSS), 85 to 132 (KLRG…SQQF), 291 to 471 (NTFD…TANL), 493 to 515 (KVAK…GASG), 544 to 567 (QRNA…GHEP), 613 to 637 (EEDN…GIAT), 702 to 771 (MSPV…IVPK), 833 to 977 (SAGS…VKTS), and 1060 to 1195 (QITV…VVEI). The span at 11–26 (YPHHQHHHHHHHHHIH) shows a compositional bias: basic residues. A compositionally biased stretch (basic and acidic residues) spans 37-50 (RSSDLEPNRSRNTD). Over residues 109 to 118 (GSAKDGAGAA) the composition is skewed to low complexity. The span at 119–132 (QQTHLQVAGQSQQF) shows a compositional bias: polar residues. Basic and acidic residues predominate over residues 300 to 313 (HEQFERGKISHETD). Positions 351–360 (QQAAAEESPQ) are enriched in low complexity. Positions 361–371 (ANPPPPPPPRP) are enriched in pro residues. The phospho-regulated basic and hydrophobic (PRBH) motif stretch occupies residues 400 to 450 (ETTKTAENADENNASRKLSIRQNIKRLRKSIKRPSKIKSKAAAPVPDSDEE). A compositionally biased stretch (basic residues) spans 422–438 (NIKRLRKSIKRPSKIKS). Residues 494–505 (VAKEPEELETKA) show a composition bias toward basic and acidic residues. The span at 545–560 (RNANNQNATTSKQPKP) shows a compositional bias: polar residues. 2 stretches are compositionally biased toward polar residues: residues 732-742 (SGPQKSMSYSP) and 856-867 (RVQSPQIGNSRE). A compositionally biased stretch (acidic residues) spans 872 to 891 (QEEEDKEAERDSEEEEEERD). 2 stretches are compositionally biased toward pro residues: residues 898–910 (SESP…PQRR) and 925–939 (VPPP…PPPS). The segment covering 940 to 968 (VETIPSVASLPSPAPVTRSMAQRSASMSR) has biased composition (low complexity). Positions 1075 to 1085 (QSDQSDQSAHQ) are enriched in polar residues. Residues 1086 to 1095 (EITDTRKTKS) show a composition bias toward basic and acidic residues. Residues 1102 to 1111 (RQNSNCSRSE) show a composition bias toward polar residues. Low complexity-rich tracts occupy residues 1114 to 1149 (SPLS…QNPS) and 1179 to 1195 (SYYS…VVEI).

Post-translationally, phosphorylated by aPKC which lowers lipid affinity and promotes dissociation from the cell cortex. In the photoreceptor cells, aPKC-mediated phosphorylation leads to its displacement from the stalk apical cortex and thus restricts its localization to the rhabdomeric apical cortex where it functions. Dephosphorylation appears to be light-dependent. Restricted to photoreceptor cells (at protein level). Not detected until approximately 48hrs after puparium formation (APF) and then maintained in the photoreceptor cells post-eclosion (at protein level).

Its subcellular location is the cytoplasm. The protein localises to the cell cortex. The protein resides in the cytosol. It is found in the cell projection. It localises to the rhabdomere. Functionally, required for the morphological differentiation and maintenance of the rhabdomeric photoreceptor apical domain. Acts as a downstream component of the gl and Pph13 transcriptional pathway which is required for photoreceptor cell development. Likely to function by regulating the trafficking or retention of rhabdomeric proteins including the phototransduction proteins ninaE and didum. The chain is Protein PIP82 from Drosophila melanogaster (Fruit fly).